The chain runs to 503 residues: Type II secretion system ATPase E (503 aa).

Cys397, Cys400, Cys430, and Cys433 together coordinate Zn(2+).

This sequence belongs to the GSP E family. In terms of assembly, forms homooligomers; most probably hexamers. Interacts with EpsL/GspL. Zn(2+) is required as a cofactor.

It localises to the cell inner membrane. The catalysed reaction is ATP + H2O + cellular proteinSide 1 = ADP + phosphate + cellular proteinSide 2.. In terms of biological role, ATPase component of the type II secretion system required for the energy-dependent secretion of extracellular factors such as proteases and toxins from the periplasm. Acts as a molecular motor to provide the energy that is required for assembly of the pseudopilus and the extrusion of substrates generated in the cytoplasm. In Vibrio cholerae serotype O1 (strain ATCC 39315 / El Tor Inaba N16961), this protein is Type II secretion system ATPase E (epsE).